A 145-amino-acid polypeptide reads, in one-letter code: Salt stress-induced protein (145 aa).

The Jacalin-type lectin domain occupies 3 to 145 (LVKIGLWGGN…IDAIGIYVHP (143 aa)). 2 repeat units span residues 6–15 (IGLWGGNGGS) and 54–64 (IGPWGGGEGTS). Residues 6-64 (IGLWGGNGGSAQDISVPPKKLLGVTIYSSDAIRSIAFNYIGVDGQEYAIGPWGGGEGTS) are 2 X approximate repeats, Gly-rich.

In terms of tissue distribution, sheaths and roots from mature plants and seedlings.

The polypeptide is Salt stress-induced protein (SALT) (Oryza sativa subsp. indica (Rice)).